The primary structure comprises 311 residues: Splicing factor spf30 (311 aa).

The Tudor domain occupies 76-139 (DFTPGNLVMA…KAMPEEKRQE (64 aa)). Disordered regions lie at residues 154–183 (RSTP…RASS) and 276–311 (STED…DEDS). Positions 168-183 (ASMSTSPSNYASRASS) are enriched in polar residues. The residue at position 173 (serine 173) is a Phosphoserine. Positions 301-311 (HIYNYREDEDS) are enriched in basic and acidic residues.

It belongs to the SMN family. Associates with spliceosomes.

The protein localises to the nucleus. Involved in spliceosome assembly. In Schizosaccharomyces pombe (strain 972 / ATCC 24843) (Fission yeast), this protein is Splicing factor spf30 (spf30).